A 269-amino-acid polypeptide reads, in one-letter code: Protein tsct-1 (269 aa).

This sequence belongs to the TSC-22/Dip/Bun family.

The chain is Protein tsct-1 from Caenorhabditis elegans.